Reading from the N-terminus, the 344-residue chain is AP2/ERF and B3 domain-containing transcription factor RAV1 (344 aa).

The segment covering 1 to 15 (MESSSVDESTTSTGS) has biased composition (low complexity). The tract at residues 1–22 (MESSSVDESTTSTGSICETPAI) is disordered. Residues 61–116 (KYKGVVPQPNGRWGAQIYEKHQRVWLGTFNEEDEAARAYDVAVHRFRRRDAVTNFK) constitute a DNA-binding region (AP2/ERF). The disordered stretch occupies residues 148–169 (ELEQSKRRRNGNGNMTRTLLTS). The segment at residues 188-292 (FEKAVTPSDV…QLYIGWKSRS (105 aa)) is a DNA-binding region (TF-B3).

The protein belongs to the AP2/ERF transcription factor family. RAV subfamily. Monomer. In terms of tissue distribution, expressed in all tissues examined: Roots, rosette leaves, cauline leaves, inflorescence stems, flowers and siliques. Highest expression in roots and rosette leaves. Very low expression in flowers.

It is found in the nucleus. Binds specifically to bipartite recognition sequences composed of two unrelated motifs, 5'-CAACA-3' and 5'-CACCTG-3'. May function as negative regulator of plant growth and development. This chain is AP2/ERF and B3 domain-containing transcription factor RAV1 (RAV1), found in Arabidopsis thaliana (Mouse-ear cress).